Consider the following 127-residue polypeptide: Large ribosomal subunit protein bL12 (127 aa).

The protein belongs to the bacterial ribosomal protein bL12 family. Homodimer. Part of the ribosomal stalk of the 50S ribosomal subunit. Forms a multimeric L10(L12)X complex, where L10 forms an elongated spine to which 2 to 4 L12 dimers bind in a sequential fashion. Binds GTP-bound translation factors.

In terms of biological role, forms part of the ribosomal stalk which helps the ribosome interact with GTP-bound translation factors. Is thus essential for accurate translation. The protein is Large ribosomal subunit protein bL12 of Clavibacter michiganensis subsp. michiganensis (strain NCPPB 382).